Reading from the N-terminus, the 298-residue chain is UDP-N-acetylenolpyruvoylglucosamine reductase (298 aa).

One can recognise an FAD-binding PCMH-type domain in the interval 27–206; it reads VGGPAQRLYR…QQQIRRLLRQ (180 aa). The active site involves Arg171. The Proton donor role is filled by Ser220. Glu290 is an active-site residue.

Belongs to the MurB family. FAD is required as a cofactor.

It is found in the cytoplasm. It carries out the reaction UDP-N-acetyl-alpha-D-muramate + NADP(+) = UDP-N-acetyl-3-O-(1-carboxyvinyl)-alpha-D-glucosamine + NADPH + H(+). The protein operates within cell wall biogenesis; peptidoglycan biosynthesis. Cell wall formation. This is UDP-N-acetylenolpyruvoylglucosamine reductase from Nitrosococcus oceani (strain ATCC 19707 / BCRC 17464 / JCM 30415 / NCIMB 11848 / C-107).